The chain runs to 84 residues: RNA-binding protein Hfq (84 aa).

The Sm domain occupies 11–71; it reads DTFLNFVRKN…ISTIMPGAPI (61 aa).

This sequence belongs to the Hfq family. As to quaternary structure, homohexamer.

Its function is as follows. RNA chaperone that binds small regulatory RNA (sRNAs) and mRNAs to facilitate mRNA translational regulation in response to envelope stress, environmental stress and changes in metabolite concentrations. Also binds with high specificity to tRNAs. This Beijerinckia indica subsp. indica (strain ATCC 9039 / DSM 1715 / NCIMB 8712) protein is RNA-binding protein Hfq.